Consider the following 152-residue polypeptide: Male-specific protein scotti (152 aa).

The protein belongs to the male-specific scotti family.

Its function is as follows. Post-meiotically transcribed gene that has a role in late spermiogenesis; required for actin cone progression during spermatid individualization. The protein is Male-specific protein scotti of Drosophila mojavensis (Fruit fly).